We begin with the raw amino-acid sequence, 808 residues long: Anaphase-promoting complex subunit 4 (808 aa).

At Tyr-469 the chain carries Phosphotyrosine. Ser-757 and Ser-758 each carry phosphoserine. Lys-772 is covalently cross-linked (Glycyl lysine isopeptide (Lys-Gly) (interchain with G-Cter in SUMO2)). A phosphoserine mark is found at Ser-777 and Ser-779. Residue Lys-798 forms a Glycyl lysine isopeptide (Lys-Gly) (interchain with G-Cter in SUMO2) linkage.

Belongs to the APC4 family. The mammalian APC/C is composed at least of 14 distinct subunits ANAPC1, ANAPC2, CDC27/APC3, ANAPC4, ANAPC5, CDC16/APC6, ANAPC7, CDC23/APC8, ANAPC10, ANAPC11, CDC26/APC12, ANAPC13, ANAPC15 and ANAPC16 that assemble into a complex of at least 19 chains with a combined molecular mass of around 1.2 MDa; APC/C interacts with FZR1 and FBXO5. In the context of the APC/C complex, directly interacts with UBE2S. Interacts with FBXO43.

The protein resides in the nucleus. Its pathway is protein modification; protein ubiquitination. Functionally, component of the anaphase promoting complex/cyclosome (APC/C), a cell cycle-regulated E3 ubiquitin ligase that controls progression through mitosis and the G1 phase of the cell cycle. The APC/C complex acts by mediating ubiquitination and subsequent degradation of target proteins: it mainly mediates the formation of 'Lys-11'-linked polyubiquitin chains and, to a lower extent, the formation of 'Lys-48'- and 'Lys-63'-linked polyubiquitin chains. The APC/C complex catalyzes assembly of branched 'Lys-11'-/'Lys-48'-linked branched ubiquitin chains on target proteins. This Homo sapiens (Human) protein is Anaphase-promoting complex subunit 4 (ANAPC4).